The primary structure comprises 489 residues: Ubiquitin-like-specific protease ESD4 (489 aa).

The disordered stretch occupies residues 43 to 66 (AMSEDSGKPASSNPTISRISRYPD). Residues 51–60 (PASSNPTISR) are compositionally biased toward polar residues. Residues 200 to 223 (ASSLEAYRKLMQSAEKRNSKLEAL) are a coiled coil. Catalysis depends on residues H380, D397, and C448.

It belongs to the peptidase C48 family. As to quaternary structure, interacts with NUA (via N-terminus). Interacts with KIN10. As to expression, expressed in seedlings, leaves, shoots, flowers and roots.

The protein localises to the nucleus membrane. It catalyses the reaction Hydrolysis of the alpha-linked peptide bond in the sequence Gly-Gly-|-Ala-Thr-Tyr at the C-terminal end of the small ubiquitin-like modifier (SUMO) propeptide, Smt3, leading to the mature form of the protein. A second reaction involves the cleavage of an epsilon-linked peptide bond between the C-terminal glycine of the mature SUMO and the lysine epsilon-amino group of the target protein.. Its activity is regulated as follows. Inhibited by thiol reagent and N-ethylmaleimide, but not by ubiquitin aldehyde, pepstatin A or benzamidine HCl. In terms of biological role, protease that catalyzes two essential functions in the SUMO pathway: processing of full-length SUMOs to their mature forms and deconjugation of SUMO from targeted proteins. Cleaves precursors of SUM1 and SUM2, but not of SUM3 or SUM5. Able to release SUM1 and SUM2 from conjugates, but unable to cleave SUM3. Acts predominantly as an isopeptidase, cleaving SUMO-conjugated proteins better than SUMO peptides. Plays an important role in the control of flowering time. This is Ubiquitin-like-specific protease ESD4 (ESD4) from Arabidopsis thaliana (Mouse-ear cress).